The sequence spans 965 residues: Forespore membrane adapter protein MUG56 (965 aa).

Residues 70–175 form a disordered region; that stretch reads SFLMHKSTDE…VQNSNSTSTS (106 aa). Over residues 82–101 the composition is skewed to polar residues; it reads DTPSNLDSPSTQNVGSTNNT. Positions 102–114 are enriched in low complexity; it reads RASQSLLRRSSSF. A compositionally biased stretch (polar residues) spans 124-158; sequence THASTDNNPFSESSTLQPQTAERTSQQAVRSAITE. Over residues 159 to 175 the composition is skewed to low complexity; it reads TTNPSVSVQNSNSTSTS. PH domains lie at 562–737 and 800–961; these read PTPV…EVAS and VIRM…KEIN.

Belongs to the SPO71 family.

It is found in the cytoplasm. Its subcellular location is the nucleus. The protein localises to the prospore membrane. May recruit a lipid transfer protein to the forespore membrane during sporulation, thereby aiding forespore membrane formation. Required for meiosis. The polypeptide is Forespore membrane adapter protein MUG56 (Schizosaccharomyces pombe (strain 972 / ATCC 24843) (Fission yeast)).